The chain runs to 492 residues: Trk system potassium uptake protein TrkI (492 aa).

The next 10 helical transmembrane spans lie at 20–40 (VLAV…LVLI), 47–67 (ALAF…SWIV), 81–101 (FVLT…PLVL), 143–163 (IMQW…LPFL), 196–216 (IYCG…MSPL), 246–266 (QLLW…VLYI), 282–302 (VQGL…WRVS), 334–354 (AWGA…GCSG), 403–423 (VVAF…GLSL), and 465–485 (WLLC…LVLL).

The protein belongs to the TrkH potassium transport family.

It localises to the cell inner membrane. Its function is as follows. Medium-affinity potassium transport system. Probably interacts with Trk system potassium uptake protein TrkA. Main K(+) transporter in osmotically adapted cells. This Halomonas elongata (strain ATCC 33173 / DSM 2581 / NBRC 15536 / NCIMB 2198 / 1H9) protein is Trk system potassium uptake protein TrkI (trkI).